The chain runs to 382 residues: Lipid-A-disaccharide synthase (382 aa).

This sequence belongs to the LpxB family.

The enzyme catalyses 2-N,3-O-bis[(3R)-3-hydroxytetradecanoyl]-alpha-D-glucosaminyl 1-phosphate + UDP-2-N,3-O-bis[(3R)-3-hydroxytetradecanoyl]-alpha-D-glucosamine = lipid A disaccharide (E. coli) + UDP + H(+). The catalysed reaction is a lipid X + a UDP-2-N,3-O-bis[(3R)-3-hydroxyacyl]-alpha-D-glucosamine = a lipid A disaccharide + UDP + H(+). Its pathway is glycolipid biosynthesis; lipid IV(A) biosynthesis; lipid IV(A) from (3R)-3-hydroxytetradecanoyl-[acyl-carrier-protein] and UDP-N-acetyl-alpha-D-glucosamine: step 5/6. Condensation of UDP-2,3-diacylglucosamine and 2,3-diacylglucosamine-1-phosphate to form lipid A disaccharide, a precursor of lipid A, a phosphorylated glycolipid that anchors the lipopolysaccharide to the outer membrane of the cell. This Escherichia coli O7:K1 (strain IAI39 / ExPEC) protein is Lipid-A-disaccharide synthase.